The primary structure comprises 1226 residues: Methionine synthase (1226 aa).

The Hcy-binding domain occupies 6–326 (RQQIEAQLKQ…EHIRQMAQAV (321 aa)). Residues Cys-248, Cys-311, and Cys-312 each contribute to the Zn(2+) site. Residues 357–618 (FINVGERTNV…VPEKLREAVE (262 aa)) enclose the Pterin-binding domain. Residues 651–745 (SALEWRTWPV…FINAEKQSGS (95 aa)) form the B12-binding N-terminal domain. Methylcob(III)alamin contacts are provided by residues Glu-695, 757-761 (GDVHD), His-760, Ser-805, Thr-809, and Ala-861. One can recognise a B12-binding domain in the interval 747–882 (NGKILLATVK…SDERRPAFIE (136 aa)). The AdoMet activation domain maps to 898 to 1226 (KKPRTKPVTL…EKWLGPNING (329 aa)). Residues Asp-948, Arg-1136, and 1191–1192 (YF) contribute to the S-adenosyl-L-methionine site.

The protein belongs to the vitamin-B12 dependent methionine synthase family. Methylcob(III)alamin is required as a cofactor. The cofactor is Zn(2+).

It carries out the reaction (6S)-5-methyl-5,6,7,8-tetrahydrofolate + L-homocysteine = (6S)-5,6,7,8-tetrahydrofolate + L-methionine. Its pathway is amino-acid biosynthesis; L-methionine biosynthesis via de novo pathway; L-methionine from L-homocysteine (MetH route): step 1/1. Functionally, catalyzes the transfer of a methyl group from methyl-cobalamin to homocysteine, yielding enzyme-bound cob(I)alamin and methionine. Subsequently, remethylates the cofactor using methyltetrahydrofolate. The chain is Methionine synthase (metH) from Vibrio parahaemolyticus serotype O3:K6 (strain RIMD 2210633).